Here is a 409-residue protein sequence, read N- to C-terminus: Pleckstrin homology domain-containing family O member 1 (409 aa).

Residues 1 to 20 (MMKKNNSTKRGPQDGNHQCA) form a disordered region. A PH domain is found at 21-132 (PPEKVGWVRK…WINALNSAIT (112 aa)). Positions 133 to 193 (RAKNRVLDEV…MLTLDLIQEE (61 aa)) are interaction with capping proteins (CPs). The interval 136–308 (NRVLDEVTVE…PHAPGQLSRI (173 aa)) is interaction with ATM, CKIP, IFP35 and NMI. Disordered stretches follow at residues 218 to 304 (LAGS…APGQ), 325 to 350 (EVQG…ESEQ), and 390 to 409 (TPDS…KSLM). Serine 227 and serine 271 each carry phosphoserine. The interval 308–409 (IQDLVARKLE…QHSQYRKSLM (102 aa)) is negative regulator of AP-1 activity. The segment covering 331–340 (DGKRKAKEPP) has biased composition (basic and acidic residues). Serine 342 carries the post-translational modification Phosphoserine. Positions 390–402 (TPDSHLRQTTQHS) are enriched in polar residues.

As to quaternary structure, heterodimer or homodimer. Interacts with CK2 and actin capping subunits (capping protein CP-alpha and CP-beta). CKIP1 and CK2 together inhibit the activity of actin capping protein at the barbed ends of actin filaments. Interacts with ATM, IFP35, JUN, JUND, NMI and PI3K. Interacts with AKT1, AKT2 and AKT3 (each isozyme of PKB), PtdIns(3,5)P2, PtdIns(4,5)P2 and PtdIns(3,4,5)P2. C-terminal fragments could be released during apoptosis via caspase-3-dependent cleavage.

The protein resides in the membrane. It is found in the nucleus. It localises to the cytoplasm. In terms of biological role, plays a role in the regulation of the actin cytoskeleton through its interactions with actin capping protein (CP). May function to target CK2 to the plasma membrane thereby serving as an adapter to facilitate the phosphorylation of CP by protein kinase 2 (CK2). Appears to target ATM to the plasma membrane. Also implicated in PI3K-regulated muscle differentiation, the regulation of AP-1 activity (plasma membrane bound AP-1 regulator that translocates to the nucleus) and the promotion of apoptosis induced by tumor necrosis factor TNF. When bound to PKB, it inhibits it probably by decreasing PKB level of phosphorylation. The protein is Pleckstrin homology domain-containing family O member 1 (PLEKHO1) of Bos taurus (Bovine).